Reading from the N-terminus, the 229-residue chain is Probable U3 small nucleolar RNA-associated protein 11 (229 aa).

Disordered regions lie at residues 1–23 (MSSLRNAIQRRAHKERAQPESRK) and 199–229 (KKPGRKRKLREDEIENQTSRPVYKWRAQRKR).

It belongs to the UTP11 family. As to quaternary structure, component of the ribosomal small subunit (SSU) processome.

It is found in the nucleus. The protein localises to the nucleolus. Its function is as follows. Involved in nucleolar processing of pre-18S ribosomal RNA. This is Probable U3 small nucleolar RNA-associated protein 11 from Oryza sativa subsp. japonica (Rice).